The chain runs to 136 residues: Small ribosomal subunit protein uS8 (136 aa).

This sequence belongs to the universal ribosomal protein uS8 family. In terms of assembly, part of the 30S ribosomal subunit. Contacts proteins S5 and S12.

One of the primary rRNA binding proteins, it binds directly to 16S rRNA central domain where it helps coordinate assembly of the platform of the 30S subunit. This Persephonella marina (strain DSM 14350 / EX-H1) protein is Small ribosomal subunit protein uS8.